Consider the following 156-residue polypeptide: 6,7-dimethyl-8-ribityllumazine synthase (156 aa).

5-amino-6-(D-ribitylamino)uracil-binding positions include Phe-23, 57 to 59 (AFE), and 81 to 83 (AVI). 86–87 (ST) contacts (2S)-2-hydroxy-3-oxobutyl phosphate. Residue His-89 is the Proton donor of the active site. Phe-114 lines the 5-amino-6-(D-ribitylamino)uracil pocket. Arg-128 lines the (2S)-2-hydroxy-3-oxobutyl phosphate pocket.

Belongs to the DMRL synthase family.

It catalyses the reaction (2S)-2-hydroxy-3-oxobutyl phosphate + 5-amino-6-(D-ribitylamino)uracil = 6,7-dimethyl-8-(1-D-ribityl)lumazine + phosphate + 2 H2O + H(+). The protein operates within cofactor biosynthesis; riboflavin biosynthesis; riboflavin from 2-hydroxy-3-oxobutyl phosphate and 5-amino-6-(D-ribitylamino)uracil: step 1/2. In terms of biological role, catalyzes the formation of 6,7-dimethyl-8-ribityllumazine by condensation of 5-amino-6-(D-ribitylamino)uracil with 3,4-dihydroxy-2-butanone 4-phosphate. This is the penultimate step in the biosynthesis of riboflavin. The protein is 6,7-dimethyl-8-ribityllumazine synthase of Sulfurospirillum multivorans (Dehalospirillum multivorans).